Consider the following 234-residue polypeptide: MFSIRSSSRVLLKASSATTRATLNAAASKTFTRSKYSLPELDYEFSATEPYISGQINEIHYTKHHQTYVNNLNASIEQAVEAKSKGEVKKLVALEKAINFNGGGYLNHCLWWKNLAPVSQGGGQPPSEDSKLGKQIVKQFGSLDKLIEITNGKLAGIQGSGWAFIVKNKANGDTIDVITTANQDTVTDPNLVPLIAIDAWEHAYYLQYQNVKADYFKNLWHVINWKEAERRFEF.

The transit peptide at 1–34 (MFSIRSSSRVLLKASSATTRATLNAAASKTFTRS) directs the protein to the mitochondrion. Mn(2+) is bound by residues histidine 60, histidine 108, aspartate 198, and histidine 202.

The protein belongs to the iron/manganese superoxide dismutase family. In terms of assembly, homotetramer. The cofactor is Mn(2+).

The protein localises to the mitochondrion matrix. It carries out the reaction 2 superoxide + 2 H(+) = H2O2 + O2. Functionally, destroys superoxide anion radicals which are normally produced within the cells and which are toxic to biological systems. This is Superoxide dismutase [Mn], mitochondrial (SOD2) from Candida albicans (Yeast).